The sequence spans 1444 residues: DNA polymerase III PolC-type (1444 aa).

Residues 428–584 (YCVFDVETTG…FDAEATAYLA (157 aa)) form the Exonuclease domain.

Belongs to the DNA polymerase type-C family. PolC subfamily.

It localises to the cytoplasm. It carries out the reaction DNA(n) + a 2'-deoxyribonucleoside 5'-triphosphate = DNA(n+1) + diphosphate. In terms of biological role, required for replicative DNA synthesis. This DNA polymerase also exhibits 3' to 5' exonuclease activity. This is DNA polymerase III PolC-type from Listeria monocytogenes serovar 1/2a (strain ATCC BAA-679 / EGD-e).